A 206-amino-acid polypeptide reads, in one-letter code: Small ribosomal subunit protein uS4 (206 aa).

Residues 96–156 (CRLDNVVYRM…EKSLNQLRIV (61 aa)) enclose the S4 RNA-binding domain.

This sequence belongs to the universal ribosomal protein uS4 family. In terms of assembly, part of the 30S ribosomal subunit. Contacts protein S5. The interaction surface between S4 and S5 is involved in control of translational fidelity.

Its function is as follows. One of the primary rRNA binding proteins, it binds directly to 16S rRNA where it nucleates assembly of the body of the 30S subunit. In terms of biological role, with S5 and S12 plays an important role in translational accuracy. The sequence is that of Small ribosomal subunit protein uS4 from Pseudomonas entomophila (strain L48).